Here is a 495-residue protein sequence, read N- to C-terminus: UDP-glycosyltransferase 73C25 (495 aa).

A UDP-alpha-D-glucose-binding site is contributed by 23-26 (GHMI). His-24 serves as the catalytic Proton acceptor. The Charge relay role is filled by Asp-129. Residues 355-358 (WSPQ), 373-381 (HCGWNSTLE), and 397-398 (DQ) each bind UDP-alpha-D-glucose.

Belongs to the UDP-glycosyltransferase family.

In terms of biological role, catalyzes the transfer of a glucose (Glc) moiety from UDP-Glc to the C-28 carboxylic group of oleanolate 3-O-beta-D-glucoside to form oleanolate 3,28-O-beta-D-diglucoside. The polypeptide is UDP-glycosyltransferase 73C25 (Barbarea vulgaris (Yellow rocket)).